The chain runs to 204 residues: UPF0134 protein MPN_655 (204 aa).

Positions 46–132 (EVENKPKIPI…FNEFKDSNNQ (87 aa)) are disordered. Residues 64–80 (SPKPLKPPKPPKPPKGP) are compositionally biased toward pro residues. Positions 117–132 (YVTRKEFNEFKDSNNQ) are enriched in basic and acidic residues.

It belongs to the UPF0134 family.

In Mycoplasma pneumoniae (strain ATCC 29342 / M129 / Subtype 1) (Mycoplasmoides pneumoniae), this protein is UPF0134 protein MPN_655.